The primary structure comprises 462 residues: Iroquois-class homeodomain protein irx-1-B (462 aa).

Positions aspartate 121–asparagine 183 form a DNA-binding region, homeobox; TALE-type. Disordered regions lie at residues glycine 191–lysine 302, serine 314–alanine 339, and serine 405–alanine 462. Acidic residues-rich tracts occupy residues glutamate 210 to isoleucine 220 and asparagine 228 to glutamate 239. A compositionally biased stretch (basic and acidic residues) spans lysine 240–glutamate 257. The span at arginine 410–proline 426 shows a compositional bias: basic and acidic residues. The segment covering phenylalanine 446–isoleucine 455 has biased composition (polar residues).

Belongs to the TALE/IRO homeobox family.

The protein resides in the nucleus. Its function is as follows. Acts partially redundantly with other irx members in neural patterning. Required for formation of the posterior forebrain, midbrain, hindbrain, and to a lesser extent, spinal cord. Acts early in neural plate development to induce expression of some but not all proneural genes, and specify a neural precursor state. Also up-regulates repressors that prevent neuronal differentiation. Patterns the neuroectoderm in both the anterior/posterior and dorsal/ventral axes. Acts primarily as a transcriptional repressor during neural development, and binds to the bmp4 promoter to repress gene expression and thus mediate down-regulation of bmp4 by wnt signaling. Controls multiple processes through bmp4-repression including neural plate development, neural crest specification and Spemann organizer development. Involved in the specification of the preplacodal field at the anterior border of the neural plate. Regulates the genetic cascade of interactions that are necessary for positioning the isthmus organizer and the formation of the midbrain-hindbrain boundary. Required during at least two stages of pronephros kidney development; during neurula stages, maintains transcription of key renal genes to define the size and identity of the pronephric anlage, probably in part through regulation of bmp-signaling. Subsequently required for proper formation of the intermediate tubule segment of the pronephros. Acts principally as a transcriptional activator during pronephros development. The chain is Iroquois-class homeodomain protein irx-1-B (irx1-b) from Xenopus laevis (African clawed frog).